Consider the following 100-residue polypeptide: MNLTPREKDKLLISMAAMVARRRLERGVKLNYPEAIALISDFVVEGARDGRPVAELMEAGAHVIGRSQVMEGVAEMIHDVQVEATFPDGTKLVTVHEPIR.

The protein belongs to the urease gamma subunit family. In terms of assembly, heterotrimer of UreA (gamma), UreB (beta) and UreC (alpha) subunits. Three heterotrimers associate to form the active enzyme.

It localises to the cytoplasm. The enzyme catalyses urea + 2 H2O + H(+) = hydrogencarbonate + 2 NH4(+). It functions in the pathway nitrogen metabolism; urea degradation; CO(2) and NH(3) from urea (urease route): step 1/1. The polypeptide is Urease subunit gamma (Rhizobium leguminosarum bv. viciae).